The sequence spans 249 residues: Cyclin-dependent kinase inhibitor 2 (249 aa).

Positions Lys-118 to Ala-180 are disordered. The span at Ala-161–Ala-180 shows a compositional bias: polar residues.

Belongs to the CDI family. ICK/KRP subfamily.

This chain is Cyclin-dependent kinase inhibitor 2 (KRP2), found in Oryza sativa subsp. japonica (Rice).